Consider the following 506-residue polypeptide: ATP synthase subunit alpha, chloroplastic (506 aa).

Residue 170–177 (GDRQTGKT) coordinates ATP.

The protein belongs to the ATPase alpha/beta chains family. As to quaternary structure, F-type ATPases have 2 components, CF(1) - the catalytic core - and CF(0) - the membrane proton channel. CF(1) has five subunits: alpha(3), beta(3), gamma(1), delta(1), epsilon(1). CF(0) has four main subunits: a, b, b' and c.

The protein resides in the plastid. It is found in the chloroplast thylakoid membrane. It catalyses the reaction ATP + H2O + 4 H(+)(in) = ADP + phosphate + 5 H(+)(out). In terms of biological role, produces ATP from ADP in the presence of a proton gradient across the membrane. The alpha chain is a regulatory subunit. The protein is ATP synthase subunit alpha, chloroplastic of Chlorella vulgaris (Green alga).